Here is a 336-residue protein sequence, read N- to C-terminus: tRNA N6-adenosine threonylcarbamoyltransferase (336 aa).

Positions 114 and 118 each coordinate Fe cation. Residues 136-140 (LVSGG), Asp169, Gly182, Asp186, and Asn275 contribute to the substrate site. Asp301 is a binding site for Fe cation.

It belongs to the KAE1 / TsaD family. Fe(2+) serves as cofactor.

The protein localises to the cytoplasm. The catalysed reaction is L-threonylcarbamoyladenylate + adenosine(37) in tRNA = N(6)-L-threonylcarbamoyladenosine(37) in tRNA + AMP + H(+). Required for the formation of a threonylcarbamoyl group on adenosine at position 37 (t(6)A37) in tRNAs that read codons beginning with adenine. Is involved in the transfer of the threonylcarbamoyl moiety of threonylcarbamoyl-AMP (TC-AMP) to the N6 group of A37, together with TsaE and TsaB. TsaD likely plays a direct catalytic role in this reaction. The chain is tRNA N6-adenosine threonylcarbamoyltransferase from Streptococcus pneumoniae (strain JJA).